The sequence spans 919 residues: MSHHVPNLYGTPIRDPHEHKRNSASMGEVNQSVSSRNCERGSEKGTKQRKKASRACDQCRRKRIKCRFDKHTGVCQGCLEVGEKCQFIRVPLKRGPAKKRASVASNEKFSSDNDPLQYRPRTHSYPMNSGNNYLPSLARNSSFPSISSLFVPSITAQSQQFVKVPYDDIKRRSSLATLGSDSSISTEFGGNYRLDENLNVRQEGKDIVAKGMITPVEEMGACSSNVRRQGSQSLPIQEQRASPYINPFISGRSRLSSLSYTSEATTSEGNTQGKNQCMLTPNSVRSIEKERLNSLTAGCPNKKLGTDGRSDKWDKNSTWKPVYRSSNPSHPSTEKNVSLNQEASAKPLMLGTYRQFDATSFYKVLGIYYNFFHINFPVIPINKSKFTDMLDPEKPNVIDEIRQINNEIIQCFKTALEVLVFCKIKQRRSSKSTKSWSRDSLCDFQKGLYYIQNFNKCIADCFQSLITIKPVLKQNSSVIPSRIKFIYFSTIIVLNFILILAGEESSLLLGPSVGVFNEFQAHKLFLPFENTSPMLLLNSNEESGDEILDYAVLFKRLYILLNILDTLQSFRLGQPKLINLNFGSAIETYFSDKTGHNQVVEKAPVALDNILRNLKLGEFITYFVLNRKSLQVNVPHHLLFTNQTDYGEFAVEKGEHDNIAGKFETLLKKKEILIRKLLNIEQKNDHILENCCNSDAEMKNIGELVCSMITLVSGILDSITNMNAENSVDLDSKPLPNAYFAQDSEEELMSPTQSITSNLASEENTRCTTKDLMGTVSIFMLPMVEECYNIISLIGPIPTTLISLYIRNGNMAKGINDRIMTLSTALNELVQITALFNTLEPFRKNAHDRAKRYYVSATSSTGCYESVMKSMYSGKCAASNASNVAPSEEENKKILKKFADIGWKLMDDSELGCCCCFFN.

Positions methionine 1 to arginine 54 are disordered. Polar residues predominate over residues serine 23–arginine 36. A compositionally biased stretch (basic and acidic residues) spans asparagine 37–threonine 46. The zn(2)-C6 fungal-type DNA-binding region spans cysteine 56–cysteine 85. Residues alanine 297–serine 338 form a disordered region. Residues leucine 304–serine 317 are compositionally biased toward basic and acidic residues. A compositionally biased stretch (polar residues) spans threonine 318–serine 338.

In terms of assembly, binds DNA in a sequence-specific manner.

The protein resides in the nucleus. This is Transcriptional regulatory protein EDS1 (EDS1) from Saccharomyces cerevisiae (strain Lalvin EC1118 / Prise de mousse) (Baker's yeast).